The sequence spans 231 residues: 7-cyano-7-deazaguanine synthase (231 aa).

An ATP-binding site is contributed by 8–18; it reads FSGGQDSTTCL. Residues cysteine 188, cysteine 197, cysteine 200, and cysteine 203 each coordinate Zn(2+).

It belongs to the QueC family. It depends on Zn(2+) as a cofactor.

The catalysed reaction is 7-carboxy-7-deazaguanine + NH4(+) + ATP = 7-cyano-7-deazaguanine + ADP + phosphate + H2O + H(+). It functions in the pathway purine metabolism; 7-cyano-7-deazaguanine biosynthesis. Functionally, catalyzes the ATP-dependent conversion of 7-carboxy-7-deazaguanine (CDG) to 7-cyano-7-deazaguanine (preQ(0)). The protein is 7-cyano-7-deazaguanine synthase of Salmonella newport (strain SL254).